Reading from the N-terminus, the 324-residue chain is Stomatin-like protein stl-1 (324 aa).

Belongs to the band 7/mec-2 family. As to expression, widely expressed in most tissues, including body wall muscles, intestinal epithelia, and pharynx and head neurons.

It localises to the mitochondrion. Its function is as follows. Mitochondrial protein that probably regulates the biogenesis and the activity of mitochondria. In neurons, involved in mitochondrial fusion and recovery of normal locomotory behavior during reoxygenation; probably acts independently of egl-9 and the canonical hypoxia response pathway. The polypeptide is Stomatin-like protein stl-1 (Caenorhabditis elegans).